Reading from the N-terminus, the 196-residue chain is Imidazoleglycerol-phosphate dehydratase (196 aa).

The protein belongs to the imidazoleglycerol-phosphate dehydratase family.

Its subcellular location is the cytoplasm. It catalyses the reaction D-erythro-1-(imidazol-4-yl)glycerol 3-phosphate = 3-(imidazol-4-yl)-2-oxopropyl phosphate + H2O. The protein operates within amino-acid biosynthesis; L-histidine biosynthesis; L-histidine from 5-phospho-alpha-D-ribose 1-diphosphate: step 6/9. The sequence is that of Imidazoleglycerol-phosphate dehydratase from Clostridium botulinum (strain Okra / Type B1).